The following is a 267-amino-acid chain: Glutamate racemase (267 aa).

Substrate contacts are provided by residues 13–14 and 45–46; these read DS and YS. The active-site Proton donor/acceptor is Cys77. 78-79 is a substrate binding site; the sequence is NT. Cys188 acts as the Proton donor/acceptor in catalysis. 189–190 lines the substrate pocket; sequence TH.

This sequence belongs to the aspartate/glutamate racemases family.

It carries out the reaction L-glutamate = D-glutamate. It functions in the pathway cell wall biogenesis; peptidoglycan biosynthesis. In terms of biological role, provides the (R)-glutamate required for cell wall biosynthesis. In Histophilus somni (strain 129Pt) (Haemophilus somnus), this protein is Glutamate racemase.